The chain runs to 72 residues: Peptide Ctri9194 (72 aa).

A signal peptide spans 1–23 (MKTQNVLLSFGIVFLMISFSSET). An Isoleucine amide modification is found at I38. The propeptide occupies 42 to 72 (SLKDVESLDFLFDPTFTAADLAVLENALEDY).

The protein belongs to the non-disulfide-bridged peptide (NDBP) superfamily. Short antimicrobial peptide (group 4) family. In terms of tissue distribution, expressed by the venom gland.

Its subcellular location is the secreted. Its function is as follows. Antimicrobial peptide. The sequence is that of Peptide Ctri9194 from Chaerilus tricostatus (Scorpion).